Here is an 831-residue protein sequence, read N- to C-terminus: DNA ligase (831 aa).

NAD(+) is bound by residues 34-38 (DADYD), 83-84 (SL), and Glu114. Lys116 functions as the N6-AMP-lysine intermediate in the catalytic mechanism. Residues Arg137, Glu174, Lys291, and Lys315 each contribute to the NAD(+) site. Residues Cys409, Cys412, Cys427, and Cys433 each contribute to the Zn(2+) site. A BRCT domain is found at 749–831 (AHTAPLNGQS…LAFLEQYSAQ (83 aa)).

This sequence belongs to the NAD-dependent DNA ligase family. LigA subfamily. Requires Mg(2+) as cofactor. Mn(2+) serves as cofactor.

It catalyses the reaction NAD(+) + (deoxyribonucleotide)n-3'-hydroxyl + 5'-phospho-(deoxyribonucleotide)m = (deoxyribonucleotide)n+m + AMP + beta-nicotinamide D-nucleotide.. Its function is as follows. DNA ligase that catalyzes the formation of phosphodiester linkages between 5'-phosphoryl and 3'-hydroxyl groups in double-stranded DNA using NAD as a coenzyme and as the energy source for the reaction. It is essential for DNA replication and repair of damaged DNA. The protein is DNA ligase of Xylella fastidiosa (strain M23).